A 231-amino-acid polypeptide reads, in one-letter code: Small ribosomal subunit protein uS3 (231 aa).

The 69-residue stretch at 39 to 107 folds into the KH type-2 domain; it reads IRKFLKAKLY…DVTINIKEER (69 aa).

It belongs to the universal ribosomal protein uS3 family. In terms of assembly, part of the 30S ribosomal subunit. Forms a tight complex with proteins S10 and S14.

In terms of biological role, binds the lower part of the 30S subunit head. Binds mRNA in the 70S ribosome, positioning it for translation. The sequence is that of Small ribosomal subunit protein uS3 from Campylobacter hominis (strain ATCC BAA-381 / DSM 21671 / CCUG 45161 / LMG 19568 / NCTC 13146 / CH001A).